The sequence spans 89 residues: Small ribosomal subunit protein uS15 (89 aa).

The segment covering 1-20 (MSITQERKSALIAEHARGKT) has biased composition (basic and acidic residues). Residues 1–24 (MSITQERKSALIAEHARGKTDTGS) form a disordered region.

It belongs to the universal ribosomal protein uS15 family. Part of the 30S ribosomal subunit. Forms a bridge to the 50S subunit in the 70S ribosome, contacting the 23S rRNA.

One of the primary rRNA binding proteins, it binds directly to 16S rRNA where it helps nucleate assembly of the platform of the 30S subunit by binding and bridging several RNA helices of the 16S rRNA. In terms of biological role, forms an intersubunit bridge (bridge B4) with the 23S rRNA of the 50S subunit in the ribosome. The polypeptide is Small ribosomal subunit protein uS15 (Maricaulis maris (strain MCS10) (Caulobacter maris)).